Consider the following 919-residue polypeptide: Puromycin-sensitive aminopeptidase (919 aa).

Substrate contacts are provided by residues glutamate 180 and 316–320 (GAMEN). Residue histidine 352 participates in Zn(2+) binding. Glutamate 353 (proton acceptor) is an active-site residue. Residues histidine 356 and glutamate 375 each contribute to the Zn(2+) site. Tyrosine 464 is subject to 3'-nitrotyrosine. The Nuclear localization signal signature appears at 726 to 730 (RRRFK).

It belongs to the peptidase M1 family. In terms of assembly, monomer. Requires Zn(2+) as cofactor. In terms of tissue distribution, detected in liver, epithelium of renal tubules, epithelium of small and large intestine, gastric epithelial cells, and alveoli of the lung (at protein level).

The protein resides in the cytoplasm. The protein localises to the cytosol. It is found in the nucleus. The enzyme catalyses Release of an N-terminal amino acid, preferentially alanine, from a wide range of peptides, amides and arylamides.. Strongly inhibited by bestatin, leuhistin, actinonin, amastatin, 1,10-phenanthroline, DFP, PCMBS, Zn(2+), Cd(2+), Co(2+), Cu(2+), Hg(2+), EDTA and puromycin. Not inhibited by PMSF, and only slightly inhibited by leupeptin and aprotinin. Activity is increased by Mg(2+) and Ca(2+). Its function is as follows. Aminopeptidase with broad substrate specificity for several peptides. Involved in proteolytic events essential for cell growth and viability. May act as regulator of neuropeptide activity. Plays a role in the antigen-processing pathway for MHC class I molecules. Involved in the N-terminal trimming of cytotoxic T-cell epitope precursors. Digests the poly-Q peptides found in many cellular proteins. Digests tau from normal brain more efficiently than tau from Alzheimer disease brain. This Homo sapiens (Human) protein is Puromycin-sensitive aminopeptidase (NPEPPS).